The primary structure comprises 205 residues: Holliday junction branch migration complex subunit RuvA (205 aa).

Positions 1 to 64 (MIGRLRGTLA…EDAHLLYGFA (64 aa)) are domain I. Positions 65-143 (EKRERELFRE…AWETSPAMFT (79 aa)) are domain II. The segment at 144–154 (LVSDGPLPVAS) is flexible linker. The tract at residues 154-205 (SESSAEADAVSALVSLGYKPQEASKAIAAIKDKAGLSSEELIRRSLKGMISK) is domain III.

It belongs to the RuvA family. As to quaternary structure, homotetramer. Forms an RuvA(8)-RuvB(12)-Holliday junction (HJ) complex. HJ DNA is sandwiched between 2 RuvA tetramers; dsDNA enters through RuvA and exits via RuvB. An RuvB hexamer assembles on each DNA strand where it exits the tetramer. Each RuvB hexamer is contacted by two RuvA subunits (via domain III) on 2 adjacent RuvB subunits; this complex drives branch migration. In the full resolvosome a probable DNA-RuvA(4)-RuvB(12)-RuvC(2) complex forms which resolves the HJ.

The protein localises to the cytoplasm. The RuvA-RuvB-RuvC complex processes Holliday junction (HJ) DNA during genetic recombination and DNA repair, while the RuvA-RuvB complex plays an important role in the rescue of blocked DNA replication forks via replication fork reversal (RFR). RuvA specifically binds to HJ cruciform DNA, conferring on it an open structure. The RuvB hexamer acts as an ATP-dependent pump, pulling dsDNA into and through the RuvAB complex. HJ branch migration allows RuvC to scan DNA until it finds its consensus sequence, where it cleaves and resolves the cruciform DNA. In Pseudomonas putida (strain ATCC 47054 / DSM 6125 / CFBP 8728 / NCIMB 11950 / KT2440), this protein is Holliday junction branch migration complex subunit RuvA.